Consider the following 389-residue polypeptide: Mitochondrial carrier homolog 1 (389 aa).

A disordered region spans residues 1 to 78; that stretch reads MGASDPEVAP…PGAPGSGDNA (78 aa). Residues 1–93 are Mitochondrial intermembrane-facing; the sequence is MGASDPEVAP…LFVALGAGVT (93 aa). The span at 15 to 33 shows a compositional bias: gly residues; sequence GAAGMAGAGAGAGARGGAP. The residue at position 29 (arginine 29) is an Omega-N-methylarginine. Solcar repeat units follow at residues 81-176 and 192-280; these read TEAL…FPPD and KKVV…INAY. A helical transmembrane segment spans residues 94–104; that stretch reads ALSHPLLYVKL. The Cytoplasmic portion of the chain corresponds to 105 to 155; the sequence is LIQVGHEPMPPTLGTNVLGRKVLYLPSFFTYAKYIVQVDGKIGLFRGLSPR. A helical transmembrane segment spans residues 156 to 176; that stretch reads LMSNALSTVTRGSMKKVFPPD. Over 177–209 the chain is Mitochondrial intermembrane; the sequence is EMEQVSNKDDMKTSLKKVVKETSYEMMMQCVSR. The chain crosses the membrane as a helical span at residues 210 to 229; that stretch reads MLAHPLHVISMRCMVQFVGR. At 230–254 the chain is on the cytoplasmic side; sequence EAKYSGVLSSIGKIFKEEGLLGFFV. Residues 255–279 traverse the membrane as a helical segment; that stretch reads GLIPHLLGDVVFLWGCNLLAHFINA. Over 280–322 the chain is Mitochondrial intermembrane; the sequence is YLVDDSVSDTPGGLGNDQNPGSQFSQALAIRSYTKFVMGIAVS. A helical transmembrane segment spans residues 323–342; it reads MLTYPFLLVGDLMAVNNCGL. Residues 343–371 lie on the Cytoplasmic side of the membrane; it reads RAGLPPYSPVFKSWIHCWKYLSVQGQLFR. A helical transmembrane segment spans residues 372 to 389; it reads GSSLLFRRVSSGSCFALE.

It belongs to the mitochondrial carrier (TC 2.A.29) family. As to quaternary structure, interacts with PSEN1.

It localises to the mitochondrion outer membrane. Protein insertase that mediates insertion of transmembrane proteins into the mitochondrial outer membrane. Catalyzes insertion of proteins with alpha-helical transmembrane regions, such as signal-anchored, tail-anchored and multi-pass membrane proteins. Does not mediate insertion of beta-barrel transmembrane proteins. May play a role in apoptosis. This chain is Mitochondrial carrier homolog 1 (Mtch1), found in Mus musculus (Mouse).